A 175-amino-acid polypeptide reads, in one-letter code: RNA pyrophosphohydrolase (175 aa).

Positions 6 to 149 constitute a Nudix hydrolase domain; it reads GYRPNVGIVI…KRDVYRRVMK (144 aa). The Nudix box signature appears at 38 to 59; sequence GGINPGETAEQAMYRELFEEVG.

It belongs to the Nudix hydrolase family. RppH subfamily. It depends on a divalent metal cation as a cofactor.

Functionally, accelerates the degradation of transcripts by removing pyrophosphate from the 5'-end of triphosphorylated RNA, leading to a more labile monophosphorylated state that can stimulate subsequent ribonuclease cleavage. The polypeptide is RNA pyrophosphohydrolase (Erwinia tasmaniensis (strain DSM 17950 / CFBP 7177 / CIP 109463 / NCPPB 4357 / Et1/99)).